Consider the following 338-residue polypeptide: MNRFLQLCVDGKTLTAGEAETLMNMMMAAEMTPSEMGGILSILAHRGETPEELAGFVKAMRAHALTVDGLPDIVDTCGTGGDGISTFNISTASAIVASAAGAKIAKHGNRSVSSKSGSADVLEELEVSIQTTPEKVKSSIETNNMGFLFAPLYHSSMKHVAGTRKELGFRTVFNLLGPLSNPLQAKRQVIGVYSVEKAGLMASALETFQPKHVMFVSSRDGLDELSITAPTDVIELKDGERREYTVSPEDFGFTNGRLEDLQVQSPKESAYLIQNIFENKSSSSALSITAFNAGAAIYTAGITASLKEGTELALETITSGGAAAQLERLKQKEEEIYA.

Residues Gly-78, 81 to 82, Thr-86, 88 to 91, 106 to 114, and Ser-118 each bind 5-phospho-alpha-D-ribose 1-diphosphate; these read GD, NIST, and KHGNRSVSS. Gly-78 contacts anthranilate. Position 90 (Ser-90) interacts with Mg(2+). Asn-109 lines the anthranilate pocket. Arg-164 contributes to the anthranilate binding site. Residues Asp-223 and Glu-224 each contribute to the Mg(2+) site.

It belongs to the anthranilate phosphoribosyltransferase family. As to quaternary structure, homodimer. Mg(2+) serves as cofactor.

It catalyses the reaction N-(5-phospho-beta-D-ribosyl)anthranilate + diphosphate = 5-phospho-alpha-D-ribose 1-diphosphate + anthranilate. It functions in the pathway amino-acid biosynthesis; L-tryptophan biosynthesis; L-tryptophan from chorismate: step 2/5. Functionally, catalyzes the transfer of the phosphoribosyl group of 5-phosphorylribose-1-pyrophosphate (PRPP) to anthranilate to yield N-(5'-phosphoribosyl)-anthranilate (PRA). The polypeptide is Anthranilate phosphoribosyltransferase (Bacillus subtilis (strain 168)).